The primary structure comprises 375 residues: Alcohol dehydrogenase 1 (375 aa).

Residue serine 2 is modified to N-acetylserine. Positions 47, 68, 98, 101, 104, 112, and 175 each coordinate Zn(2+). NAD(+) is bound by residues glycine 200–glycine 205, aspartate 224, and lysine 229. Lysine 234 is modified (N6-succinyllysine). NAD(+) is bound at residue valine 293–valine 295. Lysine 340 bears the N6-succinyllysine mark. Arginine 370 lines the NAD(+) pocket.

The protein belongs to the zinc-containing alcohol dehydrogenase family. Class-I subfamily. As to quaternary structure, dimer of identical or non-identical chains of three types (A, B, C), which are coded by 3 separate genes at different loci. Requires Zn(2+) as cofactor. In terms of tissue distribution, expressed at high levels in the liver, small intestine and eye, at moderate levels in kidney, ovary and uterus, and at low levels in the spinal cord, thymus, heart, stomach mucosa, skin and testis.

Its subcellular location is the cytoplasm. It catalyses the reaction a primary alcohol + NAD(+) = an aldehyde + NADH + H(+). It carries out the reaction a secondary alcohol + NAD(+) = a ketone + NADH + H(+). This Mus musculus (Mouse) protein is Alcohol dehydrogenase 1 (Adh1).